Consider the following 436-residue polypeptide: Homeobox protein PKNOX1 (436 aa).

Positions 24-49 (LKTEQDPNCSEPDVEGVSPPPVGSQT) are disordered. A phosphoserine mark is found at Ser-33 and Ser-41. Positions 80 to 163 (GSEGTTSASF…MNSETLLSGE (84 aa)) constitute an MEIS N-terminal domain. A DNA-binding region (homeobox; TALE-type) is located at residues 259 to 321 (SKNKRGVLPK…NARRRILQPM (63 aa)). Residues 401–436 (AEQSEDDSVDSTGDGGAALAPGHLGGLVLENSDSLQ) form a disordered region.

It belongs to the TALE/MEIS homeobox family. Interacts with MN1.

The protein localises to the nucleus. Functionally, activates transcription in the presence of PBX1A and HOXA1. The protein is Homeobox protein PKNOX1 of Bos taurus (Bovine).